Here is a 192-residue protein sequence, read N- to C-terminus: Type 1 phosphatases regulator YPI2 (192 aa).

2 disordered regions span residues 1-53 and 65-192; these read MLQR…GKHK and EFGQ…PVQK. Over residues 8 to 18 the composition is skewed to low complexity; that stretch reads QTSSSTQTETT. The span at 25–49 shows a compositional bias: basic and acidic residues; that stretch reads RRPETRQKEDSKVKWTEDVIDNEHM. Residues 69-79 are compositionally biased toward low complexity; the sequence is SSDESSDSSSD. Residues 86–103 are compositionally biased toward basic and acidic residues; sequence YERNNDFDQNHRHSHNFD. A compositionally biased stretch (polar residues) spans 134–148; sequence KGNTGMSKPSSSSPD. The span at 157–169 shows a compositional bias: basic residues; sequence IHKRNKKVRKPKR.

It belongs to the YPI1 family.

It localises to the nucleus. Regulator of type 1 phosphatases which maintains protein phosphatase activity under strict control. The sequence is that of Type 1 phosphatases regulator YPI2 (YPI2) from Scheffersomyces stipitis (strain ATCC 58785 / CBS 6054 / NBRC 10063 / NRRL Y-11545) (Yeast).